The primary structure comprises 339 residues: Exopolyphosphatase 1 (339 aa).

The interval 315–339 (QTSVRDTRGQEVDRNAANRSRGDKT) is disordered. Over residues 319 to 339 (RDTRGQEVDRNAANRSRGDKT) the composition is skewed to basic and acidic residues.

It belongs to the GppA/Ppx family. In terms of assembly, homodimer.

The catalysed reaction is [phosphate](n) + H2O = [phosphate](n-1) + phosphate + H(+). Degradation of inorganic polyphosphates (polyP). Releases orthophosphate processively from the ends of the polyP chain. This Mycobacterium leprae (strain TN) protein is Exopolyphosphatase 1.